The primary structure comprises 660 residues: Chaperone protein DnaK (660 aa).

Thr-201 bears the Phosphothreonine; by autocatalysis mark. Residues 599 to 660 (EAMQAQSASA…ADVEIVDKPE (62 aa)) are disordered. Residues 600–617 (AMQAQSASAAASSAANAQ) show a composition bias toward low complexity.

This sequence belongs to the heat shock protein 70 family.

Acts as a chaperone. The chain is Chaperone protein DnaK from Chlamydia trachomatis serovar A (strain ATCC VR-571B / DSM 19440 / HAR-13).